A 352-amino-acid polypeptide reads, in one-letter code: MSGKRLMVMAGGTGGHVFPGLAVAHHLMAQGWQVRWLGTADRMEADLVPKHGIDIEFIRISGLRGKGIKALLAAPLRIFNAWRQARAIMKAWQPDVVLGMGGYVSGPGGLAAWSCGIPVVLHEQNGIAGLTNKWLAKIATKVMQAFPGAFPDAEVVGNPVRTDVLALPLPSVRLSGRDGPTRVLAIGGSQGARVLNQTMPQVAARLGDSISLWHQVGKGALDEVNADYTRVNQSQHRVSEFIDDMASAYAWADVVVCRSGALTVSEVAAAGLPAIFVPFQHKDRQQYWNALPLEQAGAAVIYEQPQFTADAVAATLAGWDRPTLLAMAEKARAVAIPDATERVAAEVSKAAR.

Residues 13–15 (TGG), Asn-125, Arg-161, Ser-189, Ile-242, 261–266 (ALTVSE), and Gln-286 each bind UDP-N-acetyl-alpha-D-glucosamine.

This sequence belongs to the glycosyltransferase 28 family. MurG subfamily.

The protein resides in the cell inner membrane. The catalysed reaction is di-trans,octa-cis-undecaprenyl diphospho-N-acetyl-alpha-D-muramoyl-L-alanyl-D-glutamyl-meso-2,6-diaminopimeloyl-D-alanyl-D-alanine + UDP-N-acetyl-alpha-D-glucosamine = di-trans,octa-cis-undecaprenyl diphospho-[N-acetyl-alpha-D-glucosaminyl-(1-&gt;4)]-N-acetyl-alpha-D-muramoyl-L-alanyl-D-glutamyl-meso-2,6-diaminopimeloyl-D-alanyl-D-alanine + UDP + H(+). It participates in cell wall biogenesis; peptidoglycan biosynthesis. Cell wall formation. Catalyzes the transfer of a GlcNAc subunit on undecaprenyl-pyrophosphoryl-MurNAc-pentapeptide (lipid intermediate I) to form undecaprenyl-pyrophosphoryl-MurNAc-(pentapeptide)GlcNAc (lipid intermediate II). This chain is UDP-N-acetylglucosamine--N-acetylmuramyl-(pentapeptide) pyrophosphoryl-undecaprenol N-acetylglucosamine transferase, found in Erwinia tasmaniensis (strain DSM 17950 / CFBP 7177 / CIP 109463 / NCPPB 4357 / Et1/99).